The chain runs to 622 residues: 1-deoxy-D-xylulose-5-phosphate synthase (622 aa).

Thiamine diphosphate-binding positions include His80 and 121–123; that span reads GHS. Residue Asp152 participates in Mg(2+) binding. Residues 153–154, Asn181, Tyr288, and Glu370 contribute to the thiamine diphosphate site; that span reads GA. A Mg(2+)-binding site is contributed by Asn181.

This sequence belongs to the transketolase family. DXPS subfamily. In terms of assembly, homodimer. Mg(2+) serves as cofactor. Thiamine diphosphate is required as a cofactor.

The catalysed reaction is D-glyceraldehyde 3-phosphate + pyruvate + H(+) = 1-deoxy-D-xylulose 5-phosphate + CO2. It participates in metabolic intermediate biosynthesis; 1-deoxy-D-xylulose 5-phosphate biosynthesis; 1-deoxy-D-xylulose 5-phosphate from D-glyceraldehyde 3-phosphate and pyruvate: step 1/1. Its function is as follows. Catalyzes the acyloin condensation reaction between C atoms 2 and 3 of pyruvate and glyceraldehyde 3-phosphate to yield 1-deoxy-D-xylulose-5-phosphate (DXP). This is 1-deoxy-D-xylulose-5-phosphate synthase from Shewanella amazonensis (strain ATCC BAA-1098 / SB2B).